The primary structure comprises 755 residues: Bacteriophytochrome (755 aa).

Cys-24 contributes to the a tetrapyrrole binding site. One can recognise a PAS domain in the interval 26–94 (REPIHIPGSI…LQAALPPGCP (69 aa)). The tract at residues 95–504 (DALQYRATLD…RDTLTGALGE (410 aa)) is chromophore binding domain. A GAF domain is found at 152–316 (NLRALAEVAT…YLGRLLSLQV (165 aa)). Positions 529–747 (VISHHMQEPV…TFRCWLPDAG (219 aa)) constitute a Histidine kinase domain. Position 532 is a phosphohistidine; by autocatalysis (His-532).

It in the N-terminal section; belongs to the phytochrome family. In terms of processing, contains one covalently linked tetrapyrrole chromophore. Lacks the cysteine conserved in plant phytochromes (at the position of Met-259) that binds chromophore. An engineered sequence used for X-ray crystallography forms a thioether link to biliverdin through Cys-24. The natural sequence can bind phycocyanobilin and phytochromobilin in vitro, but the identity of the natural chromophore is unknown.

It carries out the reaction ATP + protein L-histidine = ADP + protein N-phospho-L-histidine.. In terms of biological role, photoreceptor which exists in two forms that are reversibly interconvertible by light: the R form that absorbs maximally in the red region of the spectrum and the FR form that absorbs maximally in the far-red region. Also has a slight blue shift for the far-red maximum. Could also absorb green light. May participate in regulating pigment synthesis like the carotenoid deinoxanthin which could protect the bacterium from intense visible light. The sequence is that of Bacteriophytochrome (bphP) from Deinococcus radiodurans (strain ATCC 13939 / DSM 20539 / JCM 16871 / CCUG 27074 / LMG 4051 / NBRC 15346 / NCIMB 9279 / VKM B-1422 / R1).